Consider the following 1792-residue polypeptide: MQESQTKSMFVSRALEKILADKEVKRPQHSQLRRACQVALDEIKAELEKQRLGAAAPPKANFIEADKYFLPFELACQSKSPRVVSTSLDCLQKLIAYGHITGNAPDSGAPGKRLIDRIVETICNCFQGPQTDEGVQLQIIKALLTAVTSPHIEIHEGTILQTVRTCYNIYLASKNLINQTTAKATLTQMLNVIFTRMENQVLQEARELEKPMQSKPQSPVIQATAGSPKFSRLKQSQAQSKPTTPEKAELPNGDHAQSGLGKVSLENGEAPRERGSPVSGRAEPSRGTDSGAQEVVKDILEDVVTSAVKEAAEKHGLPEPDRALGALECQECAVPPGVDENSQTNGIADDRQSLSSADNLEPDVQGHQVAARFSHILQKDAFLVFRSLCKLSMKPLGEGPPDPKSHELRSKVVSLQLLLSVLQNAGPVFRSHEMFVTAIKQYLCVALSKNGVSSVPDVFELSLAIFLTLLSNFKMHLKMQIEVFFKEIFLNILETSTSSFEHRWMVIQTLTRICADAQCVVDIYVNYDCDLNAANIFERLVNDLSKIAQGRSGHELGMTPLQELSLRKKGLECLVSILKCMVEWSKDLYVNPNHQATLGQERLPDQEMGDGKGLDMARRCSVTSVESTVSSGTQTAIQDDPEQFEVIKQQKEIIEHGIELFNKKPKRGIQFLQEQGMLGAAVEDIAQFLHQEERLDSTQVGEFLGDSTRFNKEVMYAYVDQLDFCEKEFVSALRTFLEGFRLPGEAQKIDRLMEKFAARYIECNQGQTLFASADTAYVLAYSIIMLTTDLHSPQVKNKMTKEQYIKMNRGINDSKDLPEEYLSSIYDEIEGKKIAMKETKEHTIATKSTKQSVASEKQRRLLYNVEMEQMAKTAKALMEAVSHAKAPFTSATHLDHVRPMFKLVWTPLLAAYSIGLQNCDDTEVASLCLEGIRCAVRIACIFGMQLERDAYVQALARFSLLTASSSITEMKQKNIDTIKTLITVAHTDGNYLGNSWHEILKCISQLELAQLIGTGVKTRYLSGSGREREGSLKGHSLAGEEFMGLGLGNLVSGGVDKRQMASFQESVGETSSQSVVVAVDRIFTGSTRLDGNAIVDFVRWLCAVSMDELASPHHPRMFSLQKIVEISYYNMNRIRLQWSRIWHVIGDHFNKVGCNPNEDVAIFAVDSLRQLSMKFLEKGELANFRFQKDFLRPFEHIMKKNRSPTIRDMVIRCIAQMVSSQAANIRSGWKNIFAVFHQAASDHDGNIVELAFQTTGHIVSTIFQHHFPAAIDSFQDAVKCLSEFACNAAFPDTSMEAIRLIRFCGKYVSERPRVLQEYTSDDMNVAPGDRVWVRGWFPILFELSCIINRCKLDVRTRGLTVMFEIMKSYGHTFAKHWWQDLFRIVFRIFDNMKLPEQQSEKSEWMTTTCNHALYAICDVFTQFYEALHEVLLSDVFAQLQWCVKQDNEQLARSGTNCLENLVISNGEKFSPAVWDETCNCMLDIFKTTIPHVLLTWRPAGMEEEVSDRHLDVDLDRQSLSSIDRNASERGQSQLSNPTDDSWKGAPYAHQKLLASLLIKCVVQLELIQTIDNIVFYPATSKKEDAEHMVAAQQDTLDAEIHIETENQGMYKFMSSQHLFKLLDCLQESHSFSKAFNSNYEQRTVLWRAGFKGKSKPNLLKQETSSLACCLRILFRMYVDENRRDSWDEIQQRLLRVCSEALAYFITVNSESHREAWTSLLLLLLTKTLKISDEKFKAHASMYYPYLCEIMQFDLIPELRAVLRKFFLRIGLVYKIWIPEEPSQVPAALSSTW.

M1 carries the N-acetylmethionine modification. The tract at residues 2 to 224 is DCB; DCB:DCB domain and DCB:HUS domain interaction; the sequence is QESQTKSMFV…KPQSPVIQAT (223 aa). The segment at 207 to 294 is disordered; that stretch reads ELEKPMQSKP…SRGTDSGAQE (88 aa). 3 positions are modified to phosphoserine: S214, S218, and S227. Polar residues predominate over residues 214–225; the sequence is SKPQSPVIQATA. Over residues 233 to 243 the composition is skewed to polar residues; it reads LKQSQAQSKPT. T244 bears the Phosphothreonine mark. Phosphoserine is present on residues S355 and S356. The interval 515-535 is HUS; DCB:HUS domain interaction; it reads ADAQCVVDIYVNYDCDLNAAN. S621 carries the post-translational modification Phosphoserine. At T623 the chain carries Phosphothreonine. S624 carries the phosphoserine modification. T633 carries the post-translational modification Phosphothreonine. Residues 661 to 792 enclose the SEC7 domain; it reads FNKKPKRGIQ…IIMLTTDLHS (132 aa). Phosphoserine is present on residues S707, S1518, S1520, S1521, S1532, S1535, S1541, and S1789.

As to quaternary structure, homodimer. Interacts with ARFGEF1/BIG1; both proteins are probably part of the same or very similar macromolecular complexes. Interacts with PRKAR1A, PRKAR2A, PRKAR1B, PRKAR2B, PPP1CC, PDE3A, TNFRSF1A, MYCBP and EXOC7. Interacts with GABRB1, GABRB2 and GABRB3. In terms of processing, in vitro phosphorylated by PKA reducing its GEF activity and dephosphorylated by phosphatase PP1.

It localises to the cytoplasm. It is found in the membrane. Its subcellular location is the golgi apparatus. The protein localises to the perinuclear region. The protein resides in the trans-Golgi network. It localises to the endosome. It is found in the cytoskeleton. Its subcellular location is the microtubule organizing center. The protein localises to the centrosome. The protein resides in the cell projection. It localises to the dendrite. It is found in the cytoplasmic vesicle. Its subcellular location is the synapse. Its activity is regulated as follows. Inhibited by brefeldin A. Functionally, promotes guanine-nucleotide exchange on ARF1 and ARF3 and to a lower extent on ARF5 and ARF6. Promotes the activation of ARF1/ARF5/ARF6 through replacement of GDP with GTP. Involved in the regulation of Golgi vesicular transport. Required for the integrity of the endosomal compartment. Involved in trafficking from the trans-Golgi network (TGN) to endosomes and is required for membrane association of the AP-1 complex and GGA1. Seems to be involved in recycling of the transferrin receptor from recycling endosomes to the plasma membrane. Probably is involved in the exit of GABA(A) receptors from the endoplasmic reticulum. Involved in constitutive release of tumor necrosis factor receptor 1 via exosome-like vesicles; the function seems to involve PKA and specifically PRKAR2B. Proposed to act as A kinase-anchoring protein (AKAP) and may mediate crosstalk between Arf and PKA pathways. The chain is Brefeldin A-inhibited guanine nucleotide-exchange protein 2 (Arfgef2) from Mus musculus (Mouse).